Reading from the N-terminus, the 156-residue chain is Small ribosomal subunit protein uS7 (156 aa).

It belongs to the universal ribosomal protein uS7 family. Part of the 30S ribosomal subunit. Contacts proteins S9 and S11.

One of the primary rRNA binding proteins, it binds directly to 16S rRNA where it nucleates assembly of the head domain of the 30S subunit. Is located at the subunit interface close to the decoding center, probably blocks exit of the E-site tRNA. This chain is Small ribosomal subunit protein uS7, found in Bifidobacterium longum subsp. infantis (strain ATCC 15697 / DSM 20088 / JCM 1222 / NCTC 11817 / S12).